A 758-amino-acid polypeptide reads, in one-letter code: CRISPR system single-strand-specific deoxyribonuclease Cas10/Csm1 (subtype III-A) (758 aa).

An HD domain region spans residues 1–82; it reads MKKEKIDLFY…TYIADNIASG (82 aa). Residues 509–647 form the GGDEF domain; the sequence is KRLAVVRLDV…EKDSISLFSS (139 aa).

Belongs to the CRISPR-associated Cas10/Csm1 family. In terms of assembly, part of the Csm effector complex that includes at least Cas10(1), Csm2(3), Csm3(5), Csm4(1), Csm5(1) and mature crRNA. The Csm complex is elongated and slightly twisted with a maximal length of 215 Angstroms and a diameter of 75-80 Angstroms. It has been modeled to have a central protein filamant of Csm3 subunits along which the dsRNA helix of paired crRNA and target RNA binds. The filament is capped at one end by Cas10 and Csm4 and at the other end by Csm5; ssDNA is thought to bind to the N-terminal HD domain of Cas10. Csm with a precursor crRNA does not include Csm5, while Cas6, the enzyme probably involved in pre-crRNA processing, is found associated with a subset of the Csm complex. A divalent metal cation serves as cofactor.

It catalyses the reaction 6 ATP = cyclic hexaadenylate + 6 diphosphate. SsDNase activity is activated by target RNA binding to the Csm-crRNA complex and is inhibited by EDTA. Its function is as follows. CRISPR (clustered regularly interspaced short palindromic repeat) is an adaptive immune system that provides protection against mobile genetic elements (viruses, transposable elements and conjugative plasmids). CRISPR clusters contain spacers, sequences complementary to antecedent mobile elements, and target invading nucleic acids. CRISPR clusters are transcribed and processed into CRISPR RNA (crRNA). The type III-A Csm effector complex binds crRNA and acts as a crRNA-guided RNase, DNase and cyclic oligoadenylate synthase; binding of target RNA cognate to the crRNA is required for all activities. In a heterologous host this Csm effector complex restricts ssRNA phage MS2, suggesting it may target RNA viruses in vivo. In terms of biological role, csm functions as a non-specific ssDNase. Base-pairing between crRNA and target RNA to form a ternary Csm complex activates a ssDNase activity; target RNA cleavage suppresses the ssDNase, a temporal control that prevents uncontrolled DNA degradation. Viral RNA transcripts probably tether the Csm complex to the viral genome, recruiting Cas10 ssDNA activity which is able to degrade DNA in the transcription bubble, spatially controlling the DNase activity. This subunit has a weak ssDNase activity that is dramatically activated by the ternary Csm effector complex (the crRNA, Cas proteins and a cognate target ssRNA). Target RNA and ssDNA are cleaved simultaneously, although RNase activity (of Csm3) is much faster. RNA cleavage by Csm3 is not required for ssDNase activity as Csm complex with inactive Csm3 still has ssDNase activity; however as the cleaved target RNA products dissociate away ssDNase activity decreases. Self-recognition, with subsequent repression of the ssDNase activity, occurs when the 5' handle of the crRNA bases pairs with the 3' flanking sequence of the target RNA (which would occur if the CRISPR locus were transcribed as an anti-pre-crRNA). This protein has low activity on dsDNA which is not stimulated by the Csm complex. Functionally, this subunit is a single-strand-specific deoxyribonuclease (ssDNase) which digests both linear and circular ssDNA; it has both exo- and endonuclease activity. Its function is as follows. When associated with the ternary Csm effector complex (the crRNA, Cas proteins and a cognate target ssRNA) synthesizes cyclic oligoadenylates (cOA) from ATP, producing cyclic triadenylate (cA3) up to cyclic hexaadenylate (cA6), which is the active cOA. The enzyme is also able to cyclize pppA3 up to pppA6. cOAs are second messengers that induce an antiviral state important for defense against invading nucleic acids. Synthesis of cOA can occur with AMP plus ATP, 2'dATP or 3'dATP (but no other nucleotides), and requires a free 3'-OH ribose moiety. The polypeptide is CRISPR system single-strand-specific deoxyribonuclease Cas10/Csm1 (subtype III-A) (Streptococcus thermophilus).